Here is a 524-residue protein sequence, read N- to C-terminus: Anthranilate synthase component 1 (524 aa).

Polar residues predominate over residues 1-16; it reads MQTTANHSSRSTQTGT. A disordered region spans residues 1–25; that stretch reads MQTTANHSSRSTQTGTRAHGAALAE. L-tryptophan-binding positions include serine 74 and 298–300; that span reads PYM. A chorismate-binding site is contributed by 339–340; it reads GT. Residue lysine 355 forms an Isoglutamyl lysine isopeptide (Lys-Gln) (interchain with Q-Cter in protein Pup) linkage. Glutamate 366 contacts Mg(2+). Residues tyrosine 454, arginine 474, 488-490, and glycine 490 contribute to the chorismate site; that span reads GGG. Residue glutamate 503 coordinates Mg(2+).

The protein belongs to the anthranilate synthase component I family. As to quaternary structure, heterotetramer consisting of two non-identical subunits: a beta subunit (TrpG) and a large alpha subunit (TrpE). Mg(2+) is required as a cofactor.

The catalysed reaction is chorismate + L-glutamine = anthranilate + pyruvate + L-glutamate + H(+). It functions in the pathway amino-acid biosynthesis; L-tryptophan biosynthesis; L-tryptophan from chorismate: step 1/5. Its activity is regulated as follows. Feedback inhibited by tryptophan. Part of a heterotetrameric complex that catalyzes the two-step biosynthesis of anthranilate, an intermediate in the biosynthesis of L-tryptophan. In the first step, the glutamine-binding beta subunit (TrpG) of anthranilate synthase (AS) provides the glutamine amidotransferase activity which generates ammonia as a substrate that, along with chorismate, is used in the second step, catalyzed by the large alpha subunit of AS (TrpE) to produce anthranilate. In the absence of TrpG, TrpE can synthesize anthranilate directly from chorismate and high concentrations of ammonia. The protein is Anthranilate synthase component 1 (trpE) of Mycolicibacterium smegmatis (strain ATCC 700084 / mc(2)155) (Mycobacterium smegmatis).